A 222-amino-acid polypeptide reads, in one-letter code: Histidinol-phosphatase (222 aa).

D8 (nucleophile) is an active-site residue. Mg(2+)-binding residues include D8, D10, and D184. The active-site Proton donor is D10.

The protein belongs to the HAD-like hydrolase superfamily. SerB family. The cofactor is Mg(2+).

The catalysed reaction is L-histidinol phosphate + H2O = L-histidinol + phosphate. It participates in amino-acid biosynthesis; L-histidine biosynthesis; L-histidine from 5-phospho-alpha-D-ribose 1-diphosphate: step 8/9. Catalyzes the dephosphorylation of histidinol-phosphate to histidinol, the direct precursor of histidine. The polypeptide is Histidinol-phosphatase (Neisseria meningitidis serogroup C (strain 8013)).